The sequence spans 489 residues: Bypass of stop codon protein 5 (489 aa).

Positions 1 to 42 (MQESKEPQNKFEGCQRISSSSSTLFGGTSFEEPRCGTSQGKE) are disordered. The span at 18 to 30 (SSSSSTLFGGTSF) shows a compositional bias: low complexity. Ser-111 and Ser-350 each carry phosphoserine.

The protein belongs to the BUL1 family.

Functionally, appears to play a role in translation fidelity, and may act when translation is compromised. May be a component of the ubiquitination pathway. The sequence is that of Bypass of stop codon protein 5 (BSC5) from Saccharomyces cerevisiae (strain ATCC 204508 / S288c) (Baker's yeast).